Here is a 285-residue protein sequence, read N- to C-terminus: 2-dehydro-3-deoxyphosphooctonate aldolase (285 aa).

Belongs to the KdsA family.

The protein resides in the cytoplasm. The enzyme catalyses D-arabinose 5-phosphate + phosphoenolpyruvate + H2O = 3-deoxy-alpha-D-manno-2-octulosonate-8-phosphate + phosphate. It functions in the pathway carbohydrate biosynthesis; 3-deoxy-D-manno-octulosonate biosynthesis; 3-deoxy-D-manno-octulosonate from D-ribulose 5-phosphate: step 2/3. It participates in bacterial outer membrane biogenesis; lipopolysaccharide biosynthesis. This Paracidovorax citrulli (strain AAC00-1) (Acidovorax citrulli) protein is 2-dehydro-3-deoxyphosphooctonate aldolase.